The primary structure comprises 472 residues: Sporozoite surface protein P36p (472 aa).

The first 23 residues, 1–23 (MMKRRRIFMYYCFCFLLKYVAFS), serve as a signal peptide directing secretion. Residues asparagine 24, asparagine 29, asparagine 93, asparagine 112, and asparagine 185 are each glycosylated (N-linked (GlcNAc...) asparagine). 6-Cys domains lie at 24 to 157 (NVTN…FKKM) and 160 to 299 (KIKG…TSKN). Disulfide bonds link cysteine 64/cysteine 138, cysteine 81/cysteine 136, cysteine 164/cysteine 188, cysteine 202/cysteine 281, and cysteine 222/cysteine 279. N-linked (GlcNAc...) asparagine glycosylation is found at asparagine 295, asparagine 306, asparagine 383, asparagine 396, asparagine 400, and asparagine 416. The segment at 359 to 385 (KMDPSDEDESNENAHNGNRANKDANYS) is disordered. Serine 449 carries the GPI-anchor amidated serine lipid modification. Positions 450-472 (SSYYEVFNYFSIAFILIIHMLLW) are cleaved as a propeptide — removed in mature form.

It is found in the cell surface. The protein localises to the cell membrane. Functionally, involved in sporozoite infection of hepatocytes and replication therein. This chain is Sporozoite surface protein P36p (P52), found in Plasmodium berghei (strain Anka).